Reading from the N-terminus, the 329-residue chain is MNSETLPAELPATLTIASRESRLAMWQAEHVRDALRKLYPACDVKILGMTTRGDQILDRTLSKVGGKGLFVKELESALADGRADLAVHSLKDVPMELPAGFALAAVMSREDPRDAFVSNDYASLDALPAGAVVGTSSLRREAMLRARYPRLDVRPLRGNLDTRLAKLDRGDYAAIILAAAGLKRLGLAARIRALLDVEDSLPAAGQGALGIEIAAGRADVAAWLAPLHDHATALAVEAERAVSRALGGSCEVPLAAHAVWRGDELHLTGSVSTTDGARVLAARAQSRAATAADALALGRAVSDELERQGARAIVDALVAASAQAQKGGA.

The residue at position 250 (Cys-250) is an S-(dipyrrolylmethanemethyl)cysteine.

Belongs to the HMBS family. Monomer. It depends on dipyrromethane as a cofactor.

The catalysed reaction is 4 porphobilinogen + H2O = hydroxymethylbilane + 4 NH4(+). Its pathway is porphyrin-containing compound metabolism; protoporphyrin-IX biosynthesis; coproporphyrinogen-III from 5-aminolevulinate: step 2/4. Its function is as follows. Tetrapolymerization of the monopyrrole PBG into the hydroxymethylbilane pre-uroporphyrinogen in several discrete steps. The sequence is that of Porphobilinogen deaminase from Burkholderia thailandensis (strain ATCC 700388 / DSM 13276 / CCUG 48851 / CIP 106301 / E264).